The following is a 492-amino-acid chain: G2/mitotic-specific cyclin CYB1 (492 aa).

Residues 1–176 (MPQVTKTNNE…QPEVGERSQS (176 aa)) are disordered. The segment covering 23–33 (QESISTIKNTT) has biased composition (polar residues). The span at 34 to 58 (ISNSQHKQQTQQQISSPPQVSVTSS) shows a compositional bias: low complexity. Over residues 59 to 83 (EGVSHVNTRQYLGDVSNQYITNAKP) the composition is skewed to polar residues. Residues 111–135 (ASDNNNNGSTSSSSNSSNNNNNDAN) are compositionally biased toward low complexity.

It belongs to the cyclin family. Cyclin AB subfamily.

In terms of biological role, essential for the control of the cell cycle at the G2/M (mitosis) transition. Interacts with the CDC2 protein kinase to form MPF. G2/M cyclins accumulate steadily during G2 and are abruptly destroyed at mitosis. The chain is G2/mitotic-specific cyclin CYB1 (CYB1) from Candida albicans (Yeast).